An 873-amino-acid chain; its full sequence is MAAIPTPRLHRGVTHLSRQTKSRARHPMSTPQHTPMMQQYLALKREHADKLLFYRMGDFYELFYEDAEKASRLLDITLTARGASAGNPIKMAGIPYHAAEGYLARLVKMGESVAIAEQIGDPALAKGPVERKVVRIVTPGTLTDAALLDDKRDNLVLAVNMVKGVLGLAWLSLASGEFKIMQASVEDLASELERLKPAELVIPDDTGLAAFEGISTPKKKLPPWQFDIESSKLALTRHFGTRDLAGFGADTLPVAVGAAGALLEYVKSTQGVNPAHISALSVEDAGELIRMDAATRRNLELTETIRGEASPTLASLLDTCATSMGSRLLGHWLHHPMRNHGKLARRHGAVRALLSRYQDVHAELDQVSDIERITSRVALRSARPRDLSALRDSLTALSGVKALAASLDSELLNELAGVLPTESPVQKMLAAAILPEPATFLRDGGVINDGFSPVLDELRAIQTDCGDFLLKLEAREKERTGITTLKVEFNRVHGFYIEVSKAQSDKVPDDYRRRQTLKNAERYITPELKEFEDKALTAQDRALALEKQLYEALLDQLAPHIAELKLIAQAVAALDVLSAFAQRAAIGNYAEPQFVPEPKLDIVAGRHPVVEAEVERFIANDTRLSAERKLLLITGPNMGGKSTYMRQNALITLLAHVGSFVPADSAVIGPIDRIFTRIGASDDLAGGRSTFMVEMTETANILNNASEHSLVLMDEVGRGTSTFDGLALAWAIARALIEKNRAYTLFATHYFELTTLAGEYPAVANVHLSAVEHKDRIVFLHHVEDGPASQSYGLAVAQLAGVPAKVIRDARRHLAELENQSAARVQPDLFSAPAPASEPELSPAMDRLQEIDPDVLSPRQALEILYELKKLAD.

The tract at residues 1–34 is disordered; sequence MAAIPTPRLHRGVTHLSRQTKSRARHPMSTPQHT. Basic residues predominate over residues 8 to 26; sequence RLHRGVTHLSRQTKSRARH. Position 635 to 642 (635 to 642) interacts with ATP; the sequence is GPNMGGKS.

Belongs to the DNA mismatch repair MutS family.

This protein is involved in the repair of mismatches in DNA. It is possible that it carries out the mismatch recognition step. This protein has a weak ATPase activity. In Chromobacterium violaceum (strain ATCC 12472 / DSM 30191 / JCM 1249 / CCUG 213 / NBRC 12614 / NCIMB 9131 / NCTC 9757 / MK), this protein is DNA mismatch repair protein MutS.